The chain runs to 103 residues: RNA-binding protein Hfq (103 aa).

The Sm domain occupies 9-68; the sequence is DPFLNALRRERVPVSIYLVNGIKLQGQIESFDQFVILLKNTVSQMVYKHAISTVVPSRPV. Residues 63–103 form a disordered region; sequence VPSRPVSHHSNNAGGGTGSNFHHGSNAQGSSAPAQDSDETE. Positions 81 to 96 are enriched in polar residues; sequence SNFHHGSNAQGSSAPA.

This sequence belongs to the Hfq family. In terms of assembly, homohexamer.

Functionally, RNA chaperone that binds small regulatory RNA (sRNAs) and mRNAs to facilitate mRNA translational regulation in response to envelope stress, environmental stress and changes in metabolite concentrations. Also binds with high specificity to tRNAs. This chain is RNA-binding protein Hfq, found in Enterobacter sp. (strain 638).